We begin with the raw amino-acid sequence, 639 residues long: MHMLLFIGALALPVFVCTQSCEPASLSPRLAGVDLEKFRLTPNAEYVDSDQQIPISTTNVGLIEQSYVETAIKLVRETFPNATFRLREDHYVGDNGVAHVHFRQTVHNLDVDNGDFNVNVGRDGSVFSYGNSFYTGPVPSITQLTKRDFTDPVAALKFALTHLQLPITAEDVSVESTKHPHKYVLRGTSGAVTNPKARLVYFVKPDGTLCLVWRVETDVDDNWLLTYVDAKTAEEIHGVVDYVSEATFQVYGWGINDPGQVDSRAVLTDPWDLKESPLTWFRDGQKNWTTTRGNNGIAQENINNLPTYLNNFRPDSPTQNFSYEYPAGGSPKDYINASITQLFYTANAYHDLLYTLGFNEKAGNFQWNNSGLGGKEKDYVILNAQDGASRNNADFATPPDGSPARMRMYLFTHTTPPRDGVFESGIVIHEYTHGLSMRLTGGPDNSRCLSAFESASMGEGWGDFMATAIRLKPSDTRATDYGMGMWVYNNEKGIRQYLYSTSMETNPLNYTSLNRMWEAHAGGTVWASMLYEVLWNLIDRHGKNDGPRPTFDERGVPKDGKYLAMKIVIDAMALQPCNPDFVQARNAILDADQALTGGQNKCEIWTGFAKRGLGQGAEYGRGRRVGSYDIPGDVCQKKI.

Residues Met-1–Val-16 form the signal peptide. The propeptide occupies Cys-17–Glu-245. Asn-287, Asn-320, Asn-336, and Asn-368 each carry an N-linked (GlcNAc...) asparagine glycan. Position 429 (His-429) interacts with Zn(2+). Glu-430 is a catalytic residue. A Zn(2+)-binding site is contributed by His-433. A glycan (N-linked (GlcNAc...) asparagine) is linked at Asn-509.

It belongs to the peptidase M36 family. Zn(2+) is required as a cofactor.

It localises to the secreted. Functionally, secreted metalloproteinase that allows assimilation of proteinaceous substrates. This chain is Extracellular metalloproteinase NpIII (NpIII), found in Aspergillus oryzae (strain ATCC 42149 / RIB 40) (Yellow koji mold).